Reading from the N-terminus, the 415-residue chain is Histidine--tRNA ligase (415 aa).

Belongs to the class-II aminoacyl-tRNA synthetase family. Homodimer.

It localises to the cytoplasm. It carries out the reaction tRNA(His) + L-histidine + ATP = L-histidyl-tRNA(His) + AMP + diphosphate + H(+). This chain is Histidine--tRNA ligase, found in Rhodospirillum rubrum (strain ATCC 11170 / ATH 1.1.1 / DSM 467 / LMG 4362 / NCIMB 8255 / S1).